Reading from the N-terminus, the 181-residue chain is Probable pyruvoyl-dependent arginine decarboxylase (181 aa).

Position 43 is a pyruvic acid (Ser) (Ser43).

This sequence belongs to the PdaD family. Pyruvate is required as a cofactor.

The catalysed reaction is L-arginine + H(+) = agmatine + CO2. In Prosthecochloris aestuarii (strain DSM 271 / SK 413), this protein is Probable pyruvoyl-dependent arginine decarboxylase.